Here is a 166-residue protein sequence, read N- to C-terminus: 3-isopropylmalate dehydratase small subunit 2 (166 aa).

It belongs to the LeuD family. LeuD type 2 subfamily. In terms of assembly, heterodimer of LeuC and LeuD.

It catalyses the reaction (2R,3S)-3-isopropylmalate = (2S)-2-isopropylmalate. It functions in the pathway amino-acid biosynthesis; L-leucine biosynthesis; L-leucine from 3-methyl-2-oxobutanoate: step 2/4. In terms of biological role, catalyzes the isomerization between 2-isopropylmalate and 3-isopropylmalate, via the formation of 2-isopropylmaleate. The sequence is that of 3-isopropylmalate dehydratase small subunit 2 (leuD2) from Thermotoga maritima (strain ATCC 43589 / DSM 3109 / JCM 10099 / NBRC 100826 / MSB8).